A 438-amino-acid polypeptide reads, in one-letter code: Adenylosuccinate synthetase (438 aa).

Residues 13-19 and 41-43 each bind GTP; these read GDEGKGK and GHT. The Proton acceptor role is filled by aspartate 14. Residues aspartate 14 and glycine 41 each coordinate Mg(2+). Residues 14–17, 39–42, threonine 130, arginine 144, glutamine 225, threonine 240, and arginine 312 each bind IMP; these read DEGK and NAGH. Histidine 42 serves as the catalytic Proton donor. Residue 308–314 participates in substrate binding; the sequence is ATTGRQR. GTP is bound by residues arginine 314, 340–342, and 422–424; these read KLD and STG.

It belongs to the adenylosuccinate synthetase family. Homodimer. Mg(2+) is required as a cofactor.

The protein localises to the cytoplasm. The enzyme catalyses IMP + L-aspartate + GTP = N(6)-(1,2-dicarboxyethyl)-AMP + GDP + phosphate + 2 H(+). Its pathway is purine metabolism; AMP biosynthesis via de novo pathway; AMP from IMP: step 1/2. Its function is as follows. Plays an important role in the de novo pathway of purine nucleotide biosynthesis. Catalyzes the first committed step in the biosynthesis of AMP from IMP. The sequence is that of Adenylosuccinate synthetase from Vesicomyosocius okutanii subsp. Calyptogena okutanii (strain HA).